A 401-amino-acid polypeptide reads, in one-letter code: Phosrestin-1 (401 aa).

The protein belongs to the arrestin family. In terms of tissue distribution, inner and outer segments, and the inner plexiform regions of the retina.

Undergoes light-induced phosphorylation, probably plays an important role in the photoreceptor transduction. The polypeptide is Phosrestin-1 (Arr2) (Drosophila miranda (Fruit fly)).